The following is a 356-amino-acid chain: MSSLPLQKSLYPLLRPLGAAYRVLMRARRRRYENGAACGTDVPCVSVGNIGWGGSGKTPVVQWLLQWAAVHGLHAVVLTRGYKASPPGLPYVVTPQSSAAHAGDEPLMLARSCPQATVVVDPVRSRSARWAQERLAPDFFVLDDGFQHVQVARDTDLVLLKKDDLHAEWGRVLPAGSWREGPEALSRAAAFCIKCGSGEFSGLVPDFENRLGSFGVPVFGFSLRPGALIPVCGAHEGAQLPAGAPYVLFSGVGDPAQVAVTVSSFLGYDPVRHHVFADHHGYTQADMDRMAGYGLPLVCTPKDAVKLTAPCGVPVWTLSLETNFHSVWNAQPPAGQAGEGFAQWWQCRWQRLAGLR.

51–58 is a binding site for ATP; it reads GWGGSGKT.

This sequence belongs to the LpxK family.

It carries out the reaction a lipid A disaccharide + ATP = a lipid IVA + ADP + H(+). It functions in the pathway glycolipid biosynthesis; lipid IV(A) biosynthesis; lipid IV(A) from (3R)-3-hydroxytetradecanoyl-[acyl-carrier-protein] and UDP-N-acetyl-alpha-D-glucosamine: step 6/6. In terms of biological role, transfers the gamma-phosphate of ATP to the 4'-position of a tetraacyldisaccharide 1-phosphate intermediate (termed DS-1-P) to form tetraacyldisaccharide 1,4'-bis-phosphate (lipid IVA). The chain is Tetraacyldisaccharide 4'-kinase from Oleidesulfovibrio alaskensis (strain ATCC BAA-1058 / DSM 17464 / G20) (Desulfovibrio alaskensis).